The chain runs to 353 residues: MSIIELKNVDVDFPQKKGKLVKAVNSVSLSIEKGDIYGIVGFSGAGKSTLVRTINLLQKPSAGDIEVDGTQFVKDGKQVISNKELQLKRRNIGMIFQGFNLLNETTVLENVAFALKHEKLSDDELEKKSLELLELVDLKEKANFYPSELSGGQKQRVAIARALANNPDILISDEATSALDPQNTQQILDLLKRLNKQFNLTVILITHEMDAVKKIATKVAVMEHGQVIEKGSLRQVFLHPKQELTKKFVGGSLEAISTLNSLHLDKLSKNESIYQLVYSVNNVAKSIIIELYKEIGVEVSMLYGNVELLNDEPIGTLVVLIKGDQEKQKQAKEFLQKQDVTLTRLDEKGNIYD.

Residues 6–249 (LKNVDVDFPQ…PKQELTKKFV (244 aa)) enclose the ABC transporter domain. Residue 41–48 (GFSGAGKS) participates in ATP binding.

It belongs to the ABC transporter superfamily. Methionine importer (TC 3.A.1.24) family. In terms of assembly, the complex is composed of two ATP-binding proteins (MetN), two transmembrane proteins (MetI) and a solute-binding protein (MetQ).

The protein resides in the cell membrane. It catalyses the reaction L-methionine(out) + ATP + H2O = L-methionine(in) + ADP + phosphate + H(+). The enzyme catalyses D-methionine(out) + ATP + H2O = D-methionine(in) + ADP + phosphate + H(+). Part of the ABC transporter complex MetNIQ involved in methionine import. Responsible for energy coupling to the transport system. This Lactobacillus acidophilus (strain ATCC 700396 / NCK56 / N2 / NCFM) protein is Methionine import ATP-binding protein MetN.